The sequence spans 291 residues: Protease HtpX (291 aa).

2 helical membrane passes run 4 to 24 and 37 to 57; these read IVIFLLTNLAVMVVFGILLTC and IISGLFGFCGAFISLLMSKFI. A Zn(2+)-binding site is contributed by His-139. Residue Glu-140 is part of the active site. His-143 contributes to the Zn(2+) binding site. The next 2 membrane-spanning stretches (helical) occupy residues 147–167 and 195–215; these read GDMVTITLISGIVNTFVIFIS and IVSTILELAFGILASIIVLWF. Glu-220 contacts Zn(2+).

The protein belongs to the peptidase M48B family. It depends on Zn(2+) as a cofactor.

It localises to the cell membrane. This is Protease HtpX from Baumannia cicadellinicola subsp. Homalodisca coagulata.